Here is a 521-residue protein sequence, read N- to C-terminus: Alkyl hydroperoxide reductase subunit F (521 aa).

Lysine 53 carries the post-translational modification N6-acetyllysine. 214-229 (DVLIVGSGPAGAAAAI) contacts FAD. Cysteine 345 and cysteine 348 are disulfide-bonded. At lysine 354 the chain carries N6-acetyllysine. 357–371 (RVAVIGGGNSGVEAA) lines the NAD(+) pocket. Position 478–488 (478–488 (TNVKGVFAAGD)) interacts with FAD.

Belongs to the class-II pyridine nucleotide-disulfide oxidoreductase family. In terms of assembly, homodimer. FAD is required as a cofactor.

Functionally, serves to protect the cell against DNA damage by alkyl hydroperoxides. It can use either NADH or NADPH as electron donor for direct reduction of redox dyes or of alkyl hydroperoxides when combined with the AhpC protein. This Escherichia coli (strain K12) protein is Alkyl hydroperoxide reductase subunit F (ahpF).